Consider the following 339-residue polypeptide: Adenosine deaminase (339 aa).

Zn(2+)-binding residues include H15 and H17. Positions 17, 19, and 172 each coordinate substrate. Position 199 (H199) interacts with Zn(2+). The active-site Proton donor is E202. D279 provides a ligand contact to Zn(2+).

It belongs to the metallo-dependent hydrolases superfamily. Adenosine and AMP deaminases family. Adenosine deaminase subfamily. Zn(2+) is required as a cofactor.

The catalysed reaction is adenosine + H2O + H(+) = inosine + NH4(+). The enzyme catalyses 2'-deoxyadenosine + H2O + H(+) = 2'-deoxyinosine + NH4(+). Catalyzes the hydrolytic deamination of adenosine and 2-deoxyadenosine. The sequence is that of Adenosine deaminase from Lacticaseibacillus paracasei (strain ATCC 334 / BCRC 17002 / CCUG 31169 / CIP 107868 / KCTC 3260 / NRRL B-441) (Lactobacillus paracasei).